A 500-amino-acid chain; its full sequence is Lysine--tRNA ligase (500 aa).

Mg(2+) contacts are provided by Glu410 and Glu417.

It belongs to the class-II aminoacyl-tRNA synthetase family. In terms of assembly, homodimer. Mg(2+) serves as cofactor.

It is found in the cytoplasm. The catalysed reaction is tRNA(Lys) + L-lysine + ATP = L-lysyl-tRNA(Lys) + AMP + diphosphate. This is Lysine--tRNA ligase from Pseudomonas savastanoi pv. phaseolicola (strain 1448A / Race 6) (Pseudomonas syringae pv. phaseolicola (strain 1448A / Race 6)).